Reading from the N-terminus, the 251-residue chain is DNA repair protein RecO (251 aa).

The protein belongs to the RecO family.

Functionally, involved in DNA repair and RecF pathway recombination. This is DNA repair protein RecO from Staphylococcus saprophyticus subsp. saprophyticus (strain ATCC 15305 / DSM 20229 / NCIMB 8711 / NCTC 7292 / S-41).